A 215-amino-acid chain; its full sequence is PRELI domain-containing protein 1, mitochondrial (215 aa).

One can recognise a PRELI/MSF1 domain in the interval 36 to 174 (TEDIVHREVT…VLARMQGEAP (139 aa)).

As to quaternary structure, forms a complex with TRIAP1 in the mitochondrion intermembrane space. As to expression, expressed within the blood islands and in the liver.

It localises to the mitochondrion. Its subcellular location is the mitochondrion intermembrane space. It carries out the reaction a 1,2-diacyl-sn-glycero-3-phosphate(in) = a 1,2-diacyl-sn-glycero-3-phosphate(out). Its function is as follows. Involved in the modulation of the mitochondrial apoptotic pathway by ensuring the accumulation of cardiolipin (CL) in mitochondrial membranes. The TRIAP1:PRELID1 complex probably functions as a PA transporter across the mitochondrion intermembrane space to provide PA for CL synthesis in the inner membrane. May be involved in hematopoiesis during avian development. This is PRELI domain-containing protein 1, mitochondrial (PRELID1) from Gallus gallus (Chicken).